The following is a 91-amino-acid chain: Potassium channel toxin AaTXK-beta (91 aa).

The signal sequence occupies residues Met1–Cys19. The propeptide occupies Gly20–Gln27. One can recognise a BetaSPN-type CS-alpha/beta domain in the interval Gln54 to Phe91. 3 disulfide bridges follow: Cys57-Cys78, Cys64-Cys83, and Cys68-Cys85.

It belongs to the long chain scorpion toxin family. Class 1 subfamily. Monomer (both chains). In terms of tissue distribution, expressed by the venom gland.

The protein resides in the secreted. In terms of biological role, inhibits voltage-gated potassium channels (Kv). Does not activate Kv7 channels. Peptide activator of Kv7.4/KCNQ4 channels. Also acts as a subtype-selective activator of channels formed by Kv7.3/KCNQ3, Kv7.2/Kv7.3 (KCNQ2/KCNQ3), Kv7.5/Kv7.3 (KCNQ3/KCNQ5) subunits. This chain is Potassium channel toxin AaTXK-beta, found in Androctonus australis (Sahara scorpion).